Reading from the N-terminus, the 643-residue chain is Threonine--tRNA ligase (643 aa).

The 61-residue stretch at 1 to 61 folds into the TGS domain; sequence MPIITLPDGS…EQDATLEIIT (61 aa). A catalytic region spans residues 243–534; that stretch reads DHRKIGKALD…ITEEYAGFFP (292 aa). Positions 334, 385, and 511 each coordinate Zn(2+).

It belongs to the class-II aminoacyl-tRNA synthetase family. In terms of assembly, homodimer. Zn(2+) serves as cofactor.

The protein resides in the cytoplasm. It carries out the reaction tRNA(Thr) + L-threonine + ATP = L-threonyl-tRNA(Thr) + AMP + diphosphate + H(+). In terms of biological role, catalyzes the attachment of threonine to tRNA(Thr) in a two-step reaction: L-threonine is first activated by ATP to form Thr-AMP and then transferred to the acceptor end of tRNA(Thr). Also edits incorrectly charged L-seryl-tRNA(Thr). The polypeptide is Threonine--tRNA ligase (Haemophilus influenzae (strain PittGG)).